The sequence spans 404 residues: MLSEQTRSLVKATVPVLQQHGVALTSHFYRRMFEHNPELKNVFNQGHQHSGQQQQALAMAVLAYARHIDDPSPLLPVLTRVAHKHVSLGIRAEHYPIVGKHLLASIRELLGEAAGDDLIQAWAEAYGLLADTLIGIENGMYGDATSADGGWSGWRPFRVAKKEIESEEIASFYLEPSDGGALPAFKPGQYVSVKRFVAEWGLSQPRQYSLSDAPNGEYLRISVKREDAAQGKPAGRVSNLLHREVQVGDVLELSAPQGDFFLHEERDGPAVLISAGVGQTPMQAMLGQLLKRGGREVRFLHAARHGGAHAMGAKVRQLADRHPQLKVHVCYETPRAQDAIGVDYQAAGRLNLADVKGIALLPDADYYLCGPLGFMRAQRDSLRGLGVAADRIHYEVFGSHPGDD.

In terms of domain architecture, Globin spans 1–138; it reads MLSEQTRSLV…LADTLIGIEN (138 aa). Histidine 85 contacts heme b. Residues tyrosine 95 and glutamate 137 each act as charge relay system in the active site. Positions 149–404 are reductase; it reads GGWSGWRPFR…EVFGSHPGDD (256 aa). The region spanning 152-263 is the FAD-binding FR-type domain; it reads SGWRPFRVAK…SAPQGDFFLH (112 aa). Residues tyrosine 190 and 206-209 each bind FAD; that span reads RQYS. 276-281 contributes to the NADP(+) binding site; it reads GVGQTP. FAD is bound at residue 396-399; that stretch reads VFGS.

It belongs to the globin family. Two-domain flavohemoproteins subfamily. In the C-terminal section; belongs to the flavoprotein pyridine nucleotide cytochrome reductase family. The cofactor is heme b. FAD is required as a cofactor.

It catalyses the reaction 2 nitric oxide + NADPH + 2 O2 = 2 nitrate + NADP(+) + H(+). It carries out the reaction 2 nitric oxide + NADH + 2 O2 = 2 nitrate + NAD(+) + H(+). Functionally, is involved in NO detoxification in an aerobic process, termed nitric oxide dioxygenase (NOD) reaction that utilizes O(2) and NAD(P)H to convert NO to nitrate, which protects the bacterium from various noxious nitrogen compounds. Therefore, plays a central role in the inducible response to nitrosative stress. This Chromobacterium violaceum (strain ATCC 12472 / DSM 30191 / JCM 1249 / CCUG 213 / NBRC 12614 / NCIMB 9131 / NCTC 9757 / MK) protein is Flavohemoprotein.